A 502-amino-acid chain; its full sequence is Phenylacetaldehyde dehydrogenase (502 aa).

251–256 (GSTEVG) contributes to the NAD(+) binding site. Catalysis depends on residues Glu-273 and Cys-307.

This sequence belongs to the aldehyde dehydrogenase family.

The enzyme catalyses 2-phenylacetaldehyde + NAD(+) + H2O = 2-phenylacetate + NADH + 2 H(+). It functions in the pathway aromatic compound metabolism. Functionally, phenylacetaldehyde dehydrogenase that catalyzes the last step in the aerobic styrene degradation pathway by mediating oxidation of phenylacetaldehyde to phenylacetic acid. The sequence is that of Phenylacetaldehyde dehydrogenase (styD) from Pseudomonas fluorescens.